The sequence spans 421 residues: MRVLVLGGGVVGVTSAYYLARAGHEVTVLDRQPGAGLETSFANAGQVSPGYSAPWAAPGIPLKAMKWLMMRHRPLVLWPQLEPRLYGWLARMLANCTQEAYQRNKGRMVRLAEFSRDALRDLRGETGIAYDHREKGTLQLFRTRKQLDHVGDDTRVLDAYGVAYEVLDPEGCIAAEPALARVRDTFVGGLRLPGDETGDAHLFTQRLAALCADRGVRFRFGVAVARLHHEAGRVTGVETATGEVLRAEAYVAAMGSYTPALLRPLGLSLPVYPVKGYSLTLPVTDEGSAPVSTVMDETYKVAITRLGDRIRVGGTAELAGFSQALRGPRRATLERSLTDLFPAGGDLSRATFWTGLRPMTPDGTPIVGATAYGNLYTNTGHGTLGWTMACGSGRMLADLITGRHPEIAHEDFAERRYRRAA.

An FAD-binding site is contributed by 3 to 17 (VLVLGGGVVGVTSAY).

Belongs to the DadA oxidoreductase family. The cofactor is FAD.

The enzyme catalyses a D-alpha-amino acid + A + H2O = a 2-oxocarboxylate + AH2 + NH4(+). The protein operates within amino-acid degradation; D-alanine degradation; NH(3) and pyruvate from D-alanine: step 1/1. Its function is as follows. Oxidative deamination of D-amino acids. The chain is D-amino acid dehydrogenase from Methylobacterium sp. (strain 4-46).